A 704-amino-acid chain; its full sequence is Protein polyglycylase TTLL10 (704 aa).

Disordered stretches follow at residues 1 to 32 (MALH…LPSP), 46 to 125 (GHRA…SVKE), and 137 to 170 (DADD…PGQG). Residues 93 to 105 (VSSKRSKRSRIHP) show a composition bias toward basic residues. Over residues 114–125 (THEKQMGSSVKE) the composition is skewed to basic and acidic residues. The TTL domain maps to 169 to 540 (QGPFFYIGGT…TCQKSLHSQK (372 aa)). Residues K301, 307-308 (QG), 350-353 (QRYV), 363-365 (KFD), and 406-407 (TN) each bind ATP. An a protein-binding site is contributed by Q307. Residues D486, E499, and N501 each coordinate Mg(2+). The interval 565–704 (LASSRPLNRL…EQRSTSHRGS (140 aa)) is disordered. Pro residues-rich tracts occupy residues 576–588 (NPNP…ANPH) and 596–612 (HPHP…PPRP). 2 stretches are compositionally biased toward low complexity: residues 616 to 629 (AASS…AAIS) and 654 to 667 (SDSS…SEPS).

Mg(2+) serves as cofactor. In terms of tissue distribution, highly expressed in testis. Expressed in brain, heart, kidney, liver, lung, muscle and trachea.

The protein resides in the cytoplasm. It is found in the cytoskeleton. It localises to the cell projection. The protein localises to the cilium. Its subcellular location is the cilium axoneme. It carries out the reaction (glycyl)(n)-glycyl-L-glutamyl-[protein] + glycine + ATP = (glycyl)(n+1)-glycyl-L-glutamyl-[protein] + ADP + phosphate + H(+). Polyglycylase which modifies both tubulin and non-tubulin proteins, generating polyglycine side chains of variable lengths on the gamma-carboxyl groups of specific glutamate residues of target proteins. Involved in the elongation step rather than the initiation step of the polyglycylation reaction. Polyglycylates alpha-tubulin and beta-tubulin. Polyglycylates non-tubulin proteins such as nucleosome assembly protein NAP1. The sequence is that of Protein polyglycylase TTLL10 from Mus musculus (Mouse).